Reading from the N-terminus, the 266-residue chain is L-cystine-binding protein TcyJ (266 aa).

A signal peptide spans 1 to 29 (MKLAHLGRQALMGVMAVALVAGMSVKSFA).

It belongs to the bacterial solute-binding protein 3 family. In terms of assembly, the complex is composed of two ATP-binding proteins (TcyN), two transmembrane proteins (TcyL) and a solute-binding protein (TcyJ).

It localises to the periplasm. Part of the ABC transporter complex TcyJLN involved in L-cystine import. Binds cystine. This Escherichia coli O6:H1 (strain CFT073 / ATCC 700928 / UPEC) protein is L-cystine-binding protein TcyJ.